A 221-amino-acid polypeptide reads, in one-letter code: Uracil-DNA glycosylase (221 aa).

Catalysis depends on Asp65, which acts as the Proton acceptor.

The protein belongs to the uracil-DNA glycosylase (UDG) superfamily. UNG family.

The protein localises to the cytoplasm. It carries out the reaction Hydrolyzes single-stranded DNA or mismatched double-stranded DNA and polynucleotides, releasing free uracil.. In terms of biological role, excises uracil residues from the DNA which can arise as a result of misincorporation of dUMP residues by DNA polymerase or due to deamination of cytosine. The sequence is that of Uracil-DNA glycosylase from Christiangramia forsetii (strain DSM 17595 / CGMCC 1.15422 / KT0803) (Gramella forsetii).